The following is a 1377-amino-acid chain: Protein RhsA (1377 aa).

Repeat copies occupy residues 330 to 352 (GKQV…HRHT), 353 to 374 (GRPE…LNPA), 375 to 417 (GLSY…EHAD), 418 to 438 (GSVT…TDAA), 439 to 460 (GRTT…TTPD), 461 to 481 (GRAS…TGPD), 482 to 502 (GLEL…TAPD), 503 to 525 (GDIT…EDAT), 526 to 546 (GSRK…TDCS), 547 to 567 (GYVT…HREE), 568 to 588 (GLSQ…KDTQ), 589 to 609 (GHET…IAPD), 610 to 629 (GSRN…TTQG), 630 to 650 (GLTR…TSEN), 651 to 671 (GSHT…TGFD), 672 to 691 (GRTQ…SEDE), 692 to 711 (GLVT…RTVK), 712 to 734 (GETA…HISE), 735 to 758 (GHRV…QTVH), 808 to 828 (GDTP…LRSF), 829 to 850 (GRYE…HLNS), 851 to 871 (LLSD…ISSP), 872 to 894 (RQTR…TAAN), 895 to 930 (LDIR…NRIA), 931 to 959 (RDAH…VIRT), 960 to 984 (DDER…TQYE), 985 to 1019 (EPLV…MSLS), and 1162 to 1186 (GTTE…HQLQ). Residues 330–1186 (GKQVRSFTYD…LNEENPHQLQ (857 aa)) are 28 X approximate tandem repeats. The disordered stretch occupies residues 1356-1377 (DAKSTQKAWNCRHSRQSNDKKR).

It belongs to the RHS family.

Its function is as follows. Rhs elements have a nonessential function. They may play an important role in the natural ecology of the cell. The protein is Protein RhsA (rhsA) of Escherichia coli (strain K12).